The following is a 304-amino-acid chain: Methionyl-tRNA formyltransferase (304 aa).

S111–P114 serves as a coordination point for (6S)-5,6,7,8-tetrahydrofolate.

The protein belongs to the Fmt family.

It carries out the reaction L-methionyl-tRNA(fMet) + (6R)-10-formyltetrahydrofolate = N-formyl-L-methionyl-tRNA(fMet) + (6S)-5,6,7,8-tetrahydrofolate + H(+). In terms of biological role, attaches a formyl group to the free amino group of methionyl-tRNA(fMet). The formyl group appears to play a dual role in the initiator identity of N-formylmethionyl-tRNA by promoting its recognition by IF2 and preventing the misappropriation of this tRNA by the elongation apparatus. This chain is Methionyl-tRNA formyltransferase, found in Campylobacter fetus subsp. fetus (strain 82-40).